A 350-amino-acid chain; its full sequence is 4-hydroxy-3-methylbut-2-enyl diphosphate reductase (350 aa).

Cysteine 36 is a binding site for [4Fe-4S] cluster. Residues histidine 65 and histidine 101 each contribute to the (2E)-4-hydroxy-3-methylbut-2-enyl diphosphate site. Histidine 65 and histidine 101 together coordinate dimethylallyl diphosphate. Residues histidine 65 and histidine 101 each contribute to the isopentenyl diphosphate site. [4Fe-4S] cluster is bound at residue cysteine 123. Histidine 151 is a (2E)-4-hydroxy-3-methylbut-2-enyl diphosphate binding site. Dimethylallyl diphosphate is bound at residue histidine 151. Histidine 151 provides a ligand contact to isopentenyl diphosphate. Glutamate 153 (proton donor) is an active-site residue. Position 192 (threonine 192) interacts with (2E)-4-hydroxy-3-methylbut-2-enyl diphosphate. Cysteine 222 is a [4Fe-4S] cluster binding site. The (2E)-4-hydroxy-3-methylbut-2-enyl diphosphate site is built by serine 250, serine 251, asparagine 252, and serine 295. The dimethylallyl diphosphate site is built by serine 250, serine 251, asparagine 252, and serine 295. Serine 250, serine 251, asparagine 252, and serine 295 together coordinate isopentenyl diphosphate.

Belongs to the IspH family. It depends on [4Fe-4S] cluster as a cofactor.

The enzyme catalyses isopentenyl diphosphate + 2 oxidized [2Fe-2S]-[ferredoxin] + H2O = (2E)-4-hydroxy-3-methylbut-2-enyl diphosphate + 2 reduced [2Fe-2S]-[ferredoxin] + 2 H(+). It catalyses the reaction dimethylallyl diphosphate + 2 oxidized [2Fe-2S]-[ferredoxin] + H2O = (2E)-4-hydroxy-3-methylbut-2-enyl diphosphate + 2 reduced [2Fe-2S]-[ferredoxin] + 2 H(+). The protein operates within isoprenoid biosynthesis; dimethylallyl diphosphate biosynthesis; dimethylallyl diphosphate from (2E)-4-hydroxy-3-methylbutenyl diphosphate: step 1/1. Its pathway is isoprenoid biosynthesis; isopentenyl diphosphate biosynthesis via DXP pathway; isopentenyl diphosphate from 1-deoxy-D-xylulose 5-phosphate: step 6/6. In terms of biological role, catalyzes the conversion of 1-hydroxy-2-methyl-2-(E)-butenyl 4-diphosphate (HMBPP) into a mixture of isopentenyl diphosphate (IPP) and dimethylallyl diphosphate (DMAPP). Acts in the terminal step of the DOXP/MEP pathway for isoprenoid precursor biosynthesis. The sequence is that of 4-hydroxy-3-methylbut-2-enyl diphosphate reductase from Rhizobium meliloti (strain 1021) (Ensifer meliloti).